Consider the following 1447-residue polypeptide: Netrin receptor DCC (1447 aa).

The signal sequence occupies residues Met-1–Ala-25. Ig-like C2-type domains are found at residues His-26–Ala-135, Pro-139–Arg-229, Pro-234–Thr-326, and Pro-331–Ile-416. Over His-26–Asn-1097 the chain is Extracellular. 3 cysteine pairs are disulfide-bonded: Cys-61–Cys-117, Cys-161–Cys-212, and Cys-261–Cys-310. Asn-94 carries an N-linked (GlcNAc...) asparagine glycan. 2 N-linked (GlcNAc...) asparagine glycosylation sites follow: Asn-299 and Asn-318. Cys-352 and Cys-400 form a disulfide bridge. Fibronectin type-III domains follow at residues Ala-431–Glu-524, Pro-530–Asp-620, Pro-625–Asn-718, Gln-728–Thr-821, Pro-846–Ala-942, and Ala-947–Val-1044. An N-linked (GlcNAc...) asparagine glycan is attached at Asn-478. Asn-628 and Asn-702 each carry an N-linked (GlcNAc...) asparagine glycan. Residues Leu-1098–Thr-1122 traverse the membrane as a helical segment. At Arg-1123–Phe-1447 the chain is on the cytoplasmic side. Disordered regions lie at residues Ser-1126–Asp-1152 and Ile-1165–Arg-1222. A compositionally biased stretch (basic residues) spans Gln-1129 to Gly-1143. Position 1178 is a phosphoserine; by MAPK1 (Ser-1178). A compositionally biased stretch (polar residues) spans Pro-1179–Glu-1221. Position 1187 is a phosphothreonine; by MAPK1 (Thr-1187). Position 1267 is a phosphoserine; by MAPK1 (Ser-1267). Disordered stretches follow at residues Ser-1288–Thr-1330 and Leu-1394–Val-1419. Residues Arg-1297–Pro-1310 show a composition bias toward polar residues. The segment at Leu-1432–Leu-1439 is interaction with MYO10.

This sequence belongs to the immunoglobulin superfamily. DCC family. Interacts with the cytoplasmic part of UNC5A, UNC5B, UNC5C and probably UNC5D. Interacts with DSCAM. Interacts with PTK2/FAK1 and MAPK1. Interacts with NTN1. Interacts with MYO10. Interacts with CBLN4; this interaction can be competed by NTN1. Interacts with SIAH1 and SIAH2. In terms of processing, ubiquitinated; mediated by SIAH1 or SIAH2 and leading to its subsequent proteasomal degradation. As to expression, found in axons of the central and peripheral nervous system and in differentiated cell types of the intestine. Not expressed in colorectal tumor cells that lost their capacity to differentiate into mucus producing cells.

Its subcellular location is the membrane. Its function is as follows. Receptor for netrin required for axon guidance. Mediates axon attraction of neuronal growth cones in the developing nervous system upon ligand binding. Its association with UNC5 proteins may trigger signaling for axon repulsion. It also acts as a dependence receptor required for apoptosis induction when not associated with netrin ligand. Implicated as a tumor suppressor gene. This is Netrin receptor DCC (DCC) from Homo sapiens (Human).